Consider the following 329-residue polypeptide: MDGQSEEVDALVQKITGLHAAIAKLPSLSPSPDVDALFTDLVTACVPPSPVDVTKLAPEAQAMREGLIRLCSEAEGKLEAHYSDMLAAFDNPLDHLGVFPYYSNYINLSKLEYELLARYVPGRHRPARVAFIGSGPLPFSSYVLAARHLPDTVFDNYDLCGAANDRATRLFRADKDVGARMSFHTADVADLTDELATYDVVFLAALVGMAAEDKAKVIAHLGAHMADGAALVARHGARGFLYPIVDPQDIGRGGFEVLAVCHPDDDVVNSVIIAQKSNDVHEYGLGSGRGGRYARGTVVPVVSPPCRFGEMVADVTQKREEFANAEVAF.

It belongs to the nicotianamine synthase (NAS)-like family.

It catalyses the reaction 3 S-adenosyl-L-methionine = nicotianamine + 3 S-methyl-5'-thioadenosine + 3 H(+). Synthesizes nicotianamine, a polyamine that is the first intermediate in the synthesis of the phytosiderophores of the mugineic acid type found in gramineae which serves as a sensor for the physiological iron status within the plant, and/or might be involved in the transport of iron. This Hordeum vulgare (Barley) protein is Probable nicotianamine synthase 4 (NAS4).